Reading from the N-terminus, the 219-residue chain is uncharacterized protein (219 aa).

A signal peptide spans 1–22 (MKKRRKICYCNTALLLMILLAG). Residue cysteine 23 is the site of N-palmitoyl cysteine attachment. Residue cysteine 23 is the site of S-diacylglycerol cysteine attachment. The segment at 26–89 (SKDGEAQQPS…SAEEKSKEDN (64 aa)) is disordered. Over residues 32-42 (QQPSNQASAVQ) the composition is skewed to polar residues. Residues 43–61 (TDEKHTEPEESTKIRKDEA) are compositionally biased toward basic and acidic residues.

It localises to the cell membrane. This is an uncharacterized protein from Bacillus subtilis (strain 168).